The chain runs to 514 residues: Probable cytosol aminopeptidase (514 aa).

Lys266 and Asp271 together coordinate Mn(2+). Lys278 is an active-site residue. Residues Asp289, Asp357, and Glu359 each contribute to the Mn(2+) site. Residue Arg361 is part of the active site.

This sequence belongs to the peptidase M17 family. The cofactor is Mn(2+).

It is found in the cytoplasm. It carries out the reaction Release of an N-terminal amino acid, Xaa-|-Yaa-, in which Xaa is preferably Leu, but may be other amino acids including Pro although not Arg or Lys, and Yaa may be Pro. Amino acid amides and methyl esters are also readily hydrolyzed, but rates on arylamides are exceedingly low.. The catalysed reaction is Release of an N-terminal amino acid, preferentially leucine, but not glutamic or aspartic acids.. Its function is as follows. Presumably involved in the processing and regular turnover of intracellular proteins. Catalyzes the removal of unsubstituted N-terminal amino acids from various peptides. In Oleidesulfovibrio alaskensis (strain ATCC BAA-1058 / DSM 17464 / G20) (Desulfovibrio alaskensis), this protein is Probable cytosol aminopeptidase.